An 89-amino-acid chain; its full sequence is Pigment dispersing factor homolog pdf-2 (89 aa).

Residues 1–27 form the signal peptide; sequence MSSRISVSLLLLAVVATMFFTANVVDA.

Probable ligand of isoforms a and b of the calcitonin receptor-like protein, pdfr-1, a G-protein coupled receptor. May not signal through isoform c of pdfr-1. Involved in locomotion; may play a role in circadian rhythms of locomotor activity. Modulator of egg-laying. The sequence is that of Pigment dispersing factor homolog pdf-2 from Caenorhabditis elegans.